The primary structure comprises 263 residues: 4-hydroxy-2-oxo-heptane-1,7-dioate aldolase (263 aa).

Histidine 45 serves as the catalytic Proton acceptor. A substrate-binding site is contributed by glutamine 147. Glutamate 149 contacts a divalent metal cation. Positions 174 and 175 each coordinate substrate. Aspartate 175 provides a ligand contact to a divalent metal cation.

This sequence belongs to the HpcH/HpaI aldolase family. Homohexamer; trimer of dimers. A divalent metal cation serves as cofactor.

It carries out the reaction 4-hydroxy-2-oxoheptanedioate = succinate semialdehyde + pyruvate. It participates in aromatic compound metabolism; 4-hydroxyphenylacetate degradation; pyruvate and succinate semialdehyde from 4-hydroxyphenylacetate: step 7/7. In terms of biological role, catalyzes the reversible retro-aldol cleavage of 4-hydroxy-2-ketoheptane-1,7-dioate (HKHD) to pyruvate and succinic semialdehyde. The sequence is that of 4-hydroxy-2-oxo-heptane-1,7-dioate aldolase from Salmonella heidelberg (strain SL476).